A 386-amino-acid polypeptide reads, in one-letter code: 1-deoxy-D-xylulose 5-phosphate reductoisomerase (386 aa).

Thr-10, Gly-11, Ser-12, Ile-13, Gly-36, Asn-38, and Asn-122 together coordinate NADPH. Lys-123 serves as a coordination point for 1-deoxy-D-xylulose 5-phosphate. Position 124 (Glu-124) interacts with NADPH. Asp-148 contacts Mn(2+). Ser-149, Glu-150, Ser-174, and His-197 together coordinate 1-deoxy-D-xylulose 5-phosphate. Glu-150 contributes to the Mn(2+) binding site. Gly-203 contributes to the NADPH binding site. Positions 210, 215, 216, and 219 each coordinate 1-deoxy-D-xylulose 5-phosphate. Glu-219 lines the Mn(2+) pocket.

It belongs to the DXR family. It depends on Mg(2+) as a cofactor. Requires Mn(2+) as cofactor.

The enzyme catalyses 2-C-methyl-D-erythritol 4-phosphate + NADP(+) = 1-deoxy-D-xylulose 5-phosphate + NADPH + H(+). The protein operates within isoprenoid biosynthesis; isopentenyl diphosphate biosynthesis via DXP pathway; isopentenyl diphosphate from 1-deoxy-D-xylulose 5-phosphate: step 1/6. Its function is as follows. Catalyzes the NADPH-dependent rearrangement and reduction of 1-deoxy-D-xylulose-5-phosphate (DXP) to 2-C-methyl-D-erythritol 4-phosphate (MEP). In Geobacter sulfurreducens (strain ATCC 51573 / DSM 12127 / PCA), this protein is 1-deoxy-D-xylulose 5-phosphate reductoisomerase.